The primary structure comprises 174 residues: Protein PopB (174 aa).

The interval 1–174 (MSHSKIKAGG…EAMKIKDDDD (174 aa)) is disordered. Over residues 50–65 (LNKSNLGSDSQTWTPG) the composition is skewed to polar residues. Residues 66-78 (STMVSLKSRSSSS) show a composition bias toward low complexity. Basic and acidic residues predominate over residues 79–89 (HKPDTGGDTKP). A compositionally biased stretch (low complexity) spans 147–161 (IALQRAIQRQTQTRQ). Positions 162–174 (KMQEAMKIKDDDD) are enriched in basic and acidic residues.

It is found in the secreted. Probably involved in host-pathogen interactions. This is Protein PopB (popB) from Ralstonia nicotianae (strain ATCC BAA-1114 / GMI1000) (Ralstonia solanacearum).